Reading from the N-terminus, the 112-residue chain is Cytochrome c3 (112 aa).

16 residues coordinate heme c: H26, H29, C34, C37, H38, H39, C49, C54, H55, H73, C83, C86, H87, C104, C109, and H110.

The cofactor is heme.

Participates in sulfate respiration coupled with phosphorylation by transferring electrons from the enzyme dehydrogenase to ferredoxin. This is Cytochrome c3 from Megalodesulfovibrio gigas (strain ATCC 19364 / DSM 1382 / NCIMB 9332 / VKM B-1759) (Desulfovibrio gigas).